Reading from the N-terminus, the 182-residue chain is MYKKLITFLFVIGALASYSNNEYTPFNKLSVKLYIDGVDNIENSYTDDNNELVLNFKEYTISIITESCDVGFDSIDIDVINDYKIIDMYTIDSSTIQRRGHTCRISTKLSCHYDKYPYIHKYDGDERQYSITAEGKCYKGIKYEISMINDDTLLRKHTLKIGSTYIFDRHGHSNTYYSKYDF.

The N-terminal stretch at 1 to 16 (MYKKLITFLFVIGALA) is a signal peptide.

Belongs to the orthopoxvirus OPG192 family.

It is found in the host endoplasmic reticulum. This Vaccinia virus (strain Copenhagen) (VACV) protein is Protein OPG192 (OPG192).